The following is a 139-amino-acid chain: Small ribosomal subunit protein uS12 (139 aa).

Residues 1 to 44 form a disordered region; it reads MPTINQLVRKPRQSKITKSKSPALNKGYNSFKKSLTDVKSPQKR. The segment covering 9–18 has biased composition (basic residues); the sequence is RKPRQSKITK. Polar residues predominate over residues 19 to 39; sequence SKSPALNKGYNSFKKSLTDVK. The residue at position 102 (D102) is a 3-methylthioaspartic acid.

Belongs to the universal ribosomal protein uS12 family. As to quaternary structure, part of the 30S ribosomal subunit. Contacts proteins S8 and S17. May interact with IF1 in the 30S initiation complex.

In terms of biological role, with S4 and S5 plays an important role in translational accuracy. Its function is as follows. Interacts with and stabilizes bases of the 16S rRNA that are involved in tRNA selection in the A site and with the mRNA backbone. Located at the interface of the 30S and 50S subunits, it traverses the body of the 30S subunit contacting proteins on the other side and probably holding the rRNA structure together. The combined cluster of proteins S8, S12 and S17 appears to hold together the shoulder and platform of the 30S subunit. This is Small ribosomal subunit protein uS12 from Lysinibacillus sphaericus (strain C3-41).